The chain runs to 445 residues: Tubulin beta-2 chain (445 aa).

GTP contacts are provided by glutamine 11, glutamate 69, serine 138, glycine 142, threonine 143, glycine 144, asparagine 204, and asparagine 226. Glutamate 69 is a Mg(2+) binding site. The disordered stretch occupies residues 424-445 (QYQDATAEDEGEFDEDEEVEEA). The segment covering 429–445 (TAEDEGEFDEDEEVEEA) has biased composition (acidic residues).

This sequence belongs to the tubulin family. As to quaternary structure, dimer of alpha and beta chains. A typical microtubule is a hollow water-filled tube with an outer diameter of 25 nm and an inner diameter of 15 nM. Alpha-beta heterodimers associate head-to-tail to form protofilaments running lengthwise along the microtubule wall with the beta-tubulin subunit facing the microtubule plus end conferring a structural polarity. Microtubules usually have 13 protofilaments but different protofilament numbers can be found in some organisms and specialized cells. Mg(2+) is required as a cofactor.

It localises to the cytoplasm. The protein resides in the cytoskeleton. Its function is as follows. Tubulin is the major constituent of microtubules, a cylinder consisting of laterally associated linear protofilaments composed of alpha- and beta-tubulin heterodimers. Microtubules grow by the addition of GTP-tubulin dimers to the microtubule end, where a stabilizing cap forms. Below the cap, tubulin dimers are in GDP-bound state, owing to GTPase activity of alpha-tubulin. This Echinococcus multilocularis (Fox tapeworm) protein is Tubulin beta-2 chain (TUB-2).